The primary structure comprises 106 residues: Urease subunit beta (106 aa).

The protein belongs to the urease beta subunit family. Heterotrimer of UreA (gamma), UreB (beta) and UreC (alpha) subunits. Three heterotrimers associate to form the active enzyme.

The protein localises to the cytoplasm. The catalysed reaction is urea + 2 H2O + H(+) = hydrogencarbonate + 2 NH4(+). It functions in the pathway nitrogen metabolism; urea degradation; CO(2) and NH(3) from urea (urease route): step 1/1. This is Urease subunit beta from Prochlorococcus marinus (strain MIT 9301).